Consider the following 430-residue polypeptide: Enolase (430 aa).

Residue Gln-167 participates in (2R)-2-phosphoglycerate binding. Glu-209 (proton donor) is an active-site residue. Residues Asp-245, Glu-286, and Asp-313 each contribute to the Mg(2+) site. Residues Lys-338, Arg-367, Ser-368, and Lys-389 each coordinate (2R)-2-phosphoglycerate. The active-site Proton acceptor is the Lys-338.

This sequence belongs to the enolase family. Mg(2+) is required as a cofactor.

It is found in the cytoplasm. The protein resides in the secreted. It localises to the cell surface. It catalyses the reaction (2R)-2-phosphoglycerate = phosphoenolpyruvate + H2O. Its pathway is carbohydrate degradation; glycolysis; pyruvate from D-glyceraldehyde 3-phosphate: step 4/5. Its function is as follows. Catalyzes the reversible conversion of 2-phosphoglycerate (2-PG) into phosphoenolpyruvate (PEP). It is essential for the degradation of carbohydrates via glycolysis. The chain is Enolase from Synechococcus sp. (strain CC9311).